The chain runs to 162 residues: Caveolin-2 (162 aa).

The Cytoplasmic segment spans residues 1–86 (MGLETEKADV…FEISKYVMYK (86 aa)). The residue at position 19 (Y19) is a Phosphotyrosine; by SRC. Residues S20 and S23 each carry the phosphoserine modification. Y27 bears the Phosphotyrosine; by SRC mark. At S36 the chain carries Phosphoserine. Residues 87-107 (FLTVFLAIPLAFLAGILFATL) constitute an intramembrane region (helical). At 108–162 (SCLHIWIIMPFVKTCLMVLPSVQTIWKSVTDAIIAPLCTSIGRSFSSVSLQLSQD) the chain is on the cytoplasmic side.

This sequence belongs to the caveolin family. As to quaternary structure, monomer or homodimer. Interacts with CAV1; the interaction forms a stable heterooligomeric complex that is required for targeting to lipid rafts and for caveolae formation. Tyrosine phosphorylated forms do not form heterooligomers with the Tyr-19-phosphorylated form existing as a monomer or dimer, and the Tyr-27-form as a monomer only. Interacts (tyrosine phosphorylated form) with the SH2 domain-containing proteins, RASA1, NCK1 and SRC. Interacts (tyrosine phosphorylated form) with INSR, the interaction (Tyr-27-phosphorylated form) is increased on insulin stimulation. Interacts (Tyr-19 phosphorylated form) with MAPK1 (phosphorylated form); the interaction, promoted by insulin, leads to nuclear location and MAPK1 activation. Interacts with STAT3; the interaction is increased on insulin-induced tyrosine phosphorylation leading to STAT activation. Post-translationally, phosphorylated on serine and tyrosine residues. CAV1 promotes phosphorylation on Ser-23 which then targets the complex to the plasma membrane, lipid rafts and caveolae. Phosphorylation on Ser-36 appears to modulate mitosis in endothelial cells. Phosphorylation on both Tyr-19 and Tyr-27 is required for insulin-induced 'Ser-727' phosphorylation of STAT3 and its activation. Phosphorylation on Tyr-19 is required for insulin-induced phosphorylation of MAPK1 and DNA binding of STAT3. Tyrosine phosphorylation is induced by both EGF and insulin (By. similarity).

It localises to the nucleus. Its subcellular location is the cytoplasm. The protein resides in the golgi apparatus membrane. It is found in the cell membrane. The protein localises to the membrane. It localises to the caveola. In terms of biological role, may act as a scaffolding protein within caveolar membranes. Interacts directly with G-protein alpha subunits and can functionally regulate their activity. Acts as an accessory protein in conjunction with CAV1 in targeting to lipid rafts and driving caveolae formation. The Ser-36 phosphorylated form has a role in modulating mitosis in endothelial cells. Positive regulator of cellular mitogenesis of the MAPK signaling pathway. Required for the insulin-stimulated nuclear translocation and activation of MAPK1 and STAT3, and the subsequent regulation of cell cycle progression. The polypeptide is Caveolin-2 (CAV2) (Callithrix jacchus (White-tufted-ear marmoset)).